A 353-amino-acid polypeptide reads, in one-letter code: Virulence plasmid protein pGP2-D (353 aa).

The chain is Virulence plasmid protein pGP2-D from Chlamydia muridarum (strain MoPn / Nigg).